A 185-amino-acid polypeptide reads, in one-letter code: GTP cyclohydrolase 1 (185 aa).

Residues C76, H79, and C147 each coordinate Zn(2+).

This sequence belongs to the GTP cyclohydrolase I family. As to quaternary structure, toroid-shaped homodecamer, composed of two pentamers of five dimers.

The enzyme catalyses GTP + H2O = 7,8-dihydroneopterin 3'-triphosphate + formate + H(+). It participates in cofactor biosynthesis; 7,8-dihydroneopterin triphosphate biosynthesis; 7,8-dihydroneopterin triphosphate from GTP: step 1/1. This is GTP cyclohydrolase 1 from Clostridium perfringens (strain ATCC 13124 / DSM 756 / JCM 1290 / NCIMB 6125 / NCTC 8237 / Type A).